The following is a 931-amino-acid chain: Elicitor of plant defense protein 1 (931 aa).

Residues 13-32 (NYNSVIPPPEPLNTDPDMHP) are disordered. The uDENN domain occupies 19 to 277 (PPPEPLNTDP…NLCTEAFNPL (259 aa)). The cDENN domain occupies 301-433 (EIPGSRSIDL…ARRKLMSLLQ (133 aa)). One can recognise a dDENN domain in the interval 435-799 (AAPHKLRYGV…DREMQPANNA (365 aa)). Disordered stretches follow at residues 478-552 (LGKW…SRSD) and 566-586 (SGHFGEEKMRRSSSFGIDKHP). Residues 521-537 (TSKSGKTSPQSSVSPVS) show a composition bias toward polar residues. Residues 566–575 (SGHFGEEKMR) show a composition bias toward basic and acidic residues. Residues 666–714 (GHCFNWIPKDNTSICNICNDHAEGDGIYKCTGCKIFSHGRCLGHASLVC) form a Phorbol-ester/DAG-type zinc finger.

This sequence belongs to the EPD1 elicitor family.

The protein localises to the secreted. It is found in the host cell. Its function is as follows. Acts as an elicitor that triggers cell death and defense responses in the host plants. The chain is Elicitor of plant defense protein 1 from Fusarium odoratissimum (strain NRRL 54006).